The primary structure comprises 196 residues: Holliday junction branch migration complex subunit RuvA (196 aa).

Residues 1–69 (MIVGLRGTII…EDAHLLFGFC (69 aa)) form a domain I region. Positions 70–148 (EEIEKQTFER…QLLQSQEESI (79 aa)) are domain II. Positions 149-157 (APSNNLKYE) are flexible linker. A domain III region spans residues 157 to 196 (EASLALQSLGFKRNEIQKVLEHIEALSVSEIVKEALKRLA).

It belongs to the RuvA family. Homotetramer. Forms an RuvA(8)-RuvB(12)-Holliday junction (HJ) complex. HJ DNA is sandwiched between 2 RuvA tetramers; dsDNA enters through RuvA and exits via RuvB. An RuvB hexamer assembles on each DNA strand where it exits the tetramer. Each RuvB hexamer is contacted by two RuvA subunits (via domain III) on 2 adjacent RuvB subunits; this complex drives branch migration. In the full resolvosome a probable DNA-RuvA(4)-RuvB(12)-RuvC(2) complex forms which resolves the HJ.

Its subcellular location is the cytoplasm. Functionally, the RuvA-RuvB-RuvC complex processes Holliday junction (HJ) DNA during genetic recombination and DNA repair, while the RuvA-RuvB complex plays an important role in the rescue of blocked DNA replication forks via replication fork reversal (RFR). RuvA specifically binds to HJ cruciform DNA, conferring on it an open structure. The RuvB hexamer acts as an ATP-dependent pump, pulling dsDNA into and through the RuvAB complex. HJ branch migration allows RuvC to scan DNA until it finds its consensus sequence, where it cleaves and resolves the cruciform DNA. The polypeptide is Holliday junction branch migration complex subunit RuvA (Helicobacter hepaticus (strain ATCC 51449 / 3B1)).